A 236-amino-acid chain; its full sequence is MNSLSYLNHELEQFPSPEFALTDPNGLLAVGGDLQPKRLLNAYYEGIFPWFNIDDPILWWSPDPRAVFVPGNMKTSRSLLKHLKKQPWRYSINHAFSQVIEGCAAPRSSQDGTWITPEIQDAYLKLHELGKAHSIEVWHQDELIGGLYGLATGQVFCGESMFHTQTNASKAAMLLLHQHLLKQGFKLIDAQVMNPHLASLGATALRRKDFINLLKRFRDLPVAADAWARSEVSLEL.

It belongs to the L/F-transferase family.

It localises to the cytoplasm. The enzyme catalyses N-terminal L-lysyl-[protein] + L-leucyl-tRNA(Leu) = N-terminal L-leucyl-L-lysyl-[protein] + tRNA(Leu) + H(+). The catalysed reaction is N-terminal L-arginyl-[protein] + L-leucyl-tRNA(Leu) = N-terminal L-leucyl-L-arginyl-[protein] + tRNA(Leu) + H(+). It catalyses the reaction L-phenylalanyl-tRNA(Phe) + an N-terminal L-alpha-aminoacyl-[protein] = an N-terminal L-phenylalanyl-L-alpha-aminoacyl-[protein] + tRNA(Phe). In terms of biological role, functions in the N-end rule pathway of protein degradation where it conjugates Leu, Phe and, less efficiently, Met from aminoacyl-tRNAs to the N-termini of proteins containing an N-terminal arginine or lysine. The protein is Leucyl/phenylalanyl-tRNA--protein transferase of Shewanella woodyi (strain ATCC 51908 / MS32).